The chain runs to 337 residues: Mating-type protein MAT-2 (337 aa).

The HMG box DNA-binding region spans 125–193 (APRPMNCWII…EHLRQHPNYK (69 aa)). The disordered stretch occupies residues 171–219 (KRPWQDAAQSAKEEHLRQHPNYKYTPRKPGEKKKRQSRKSKRAAATTTA). The span at 200–212 (GEKKKRQSRKSKR) shows a compositional bias: basic residues.

The protein resides in the nucleus. The polypeptide is Mating-type protein MAT-2 (MAT2) (Cochliobolus sativus (Common root rot and spot blotch fungus)).